Reading from the N-terminus, the 75-residue chain is uncharacterized protein (75 aa).

This is an uncharacterized protein from Rickettsia conorii (strain ATCC VR-613 / Malish 7).